The following is a 124-amino-acid chain: Succinate dehydrogenase cytochrome b556 subunit (124 aa).

At 1–29 the chain is on the cytoplasmic side; the sequence is MTKIKQEIYNKRPTSPHLTIYKPQISSTL. A helical membrane pass occupies residues 30-55; it reads SILHRMTGVALFFVVSILVWWLILSK. Residues 56 to 67 lie on the Periplasmic side of the membrane; sequence YDNNYLQLARCC. A helical transmembrane segment spans residues 68-88; it reads IIKICLVAFSYAWCYHLCNGI. Residue histidine 83 coordinates heme. The Cytoplasmic portion of the chain corresponds to 89 to 103; that stretch reads RHLFWDIGYGFSIRA. Residues 104–124 traverse the membrane as a helical segment; the sequence is VNITGWCVVVCSILLTMLLWV.

Belongs to the cytochrome b560 family. Part of an enzyme complex containing four subunits: a flavoprotein, an iron-sulfur protein, plus two membrane-anchoring proteins, SdhC and SdhD. The complex can form homotrimers. It depends on heme as a cofactor.

The protein resides in the cell inner membrane. Its pathway is carbohydrate metabolism; tricarboxylic acid cycle. Its function is as follows. Membrane-anchoring subunit of succinate dehydrogenase (SDH). In Rickettsia typhi (strain ATCC VR-144 / Wilmington), this protein is Succinate dehydrogenase cytochrome b556 subunit (sdhC).